The chain runs to 72 residues: Disintegrin sasaimin (72 aa).

In terms of domain architecture, Disintegrin spans 1–72 (EAGEECDCGA…SAGCPRNPFH (72 aa)). Disulfide bonds link cysteine 6/cysteine 21, cysteine 8/cysteine 16, cysteine 15/cysteine 38, cysteine 29/cysteine 35, cysteine 34/cysteine 59, and cysteine 47/cysteine 66. The Cell attachment site signature appears at 51–53 (RGD).

Belongs to the venom metalloproteinase (M12B) family. P-II subfamily. P-IIa sub-subfamily. In terms of assembly, monomer. In terms of tissue distribution, expressed by the venom gland.

Its subcellular location is the secreted. In terms of biological role, inhibits ADP- (IC(50)=66 nM) and collagen-induced (IC(50)=100 nM) aggregation of human platelets. In vitro, inhibits adhesion of endothelial cells to vitronectin, type-I collagen and, to a lower degree, fibronectin and laminin. The polypeptide is Disintegrin sasaimin (Cerrophidion sasai (Costa Rica montane pitviper)).